Reading from the N-terminus, the 306-residue chain is Curved DNA-binding protein (306 aa).

The 65-residue stretch at 5–69 (DYYAIMGVKP…QRRAEYDQMW (65 aa)) folds into the J domain.

It is found in the cytoplasm. The protein resides in the nucleoid. Functionally, DNA-binding protein that preferentially recognizes a curved DNA sequence. It is probably a functional analog of DnaJ; displays overlapping activities with DnaJ, but functions under different conditions, probably acting as a molecular chaperone in an adaptive response to environmental stresses other than heat shock. Lacks autonomous chaperone activity; binds native substrates and targets them for recognition by DnaK. Its activity is inhibited by the binding of CbpM. This is Curved DNA-binding protein from Escherichia coli O7:K1 (strain IAI39 / ExPEC).